The sequence spans 307 residues: Small ribosomal subunit biogenesis GTPase RsgA (307 aa).

The CP-type G domain maps to 64–229 (KNSLIRPSIA…IADTPGFSSL (166 aa)). GTP-binding positions include 113–116 (SKLD) and 172–180 (GQTGAGKTT). Residues Cys-253, Cys-258, His-260, and Cys-266 each coordinate Zn(2+).

Belongs to the TRAFAC class YlqF/YawG GTPase family. RsgA subfamily. In terms of assembly, monomer. Associates with 30S ribosomal subunit, binds 16S rRNA. Requires Zn(2+) as cofactor.

It localises to the cytoplasm. Functionally, one of several proteins that assist in the late maturation steps of the functional core of the 30S ribosomal subunit. Helps release RbfA from mature subunits. May play a role in the assembly of ribosomal proteins into the subunit. Circularly permuted GTPase that catalyzes slow GTP hydrolysis, GTPase activity is stimulated by the 30S ribosomal subunit. The polypeptide is Small ribosomal subunit biogenesis GTPase RsgA (Lactococcus lactis subsp. lactis (strain IL1403) (Streptococcus lactis)).